A 243-amino-acid polypeptide reads, in one-letter code: Zinc import ATP-binding protein ZnuC (243 aa).

Positions 4-219 constitute an ABC transporter domain; that stretch reads ITVENLSVRY…PEYRALFGTG (216 aa). Residue 36-43 coordinates ATP; the sequence is GPNGSGKT.

It belongs to the ABC transporter superfamily. Zinc importer (TC 3.A.1.15.5) family. In terms of assembly, the complex is composed of two ATP-binding proteins (ZnuC), two transmembrane proteins (ZnuB) and a solute-binding protein (ZnuA).

The protein localises to the cell inner membrane. The catalysed reaction is Zn(2+)(out) + ATP(in) + H2O(in) = Zn(2+)(in) + ADP(in) + phosphate(in) + H(+)(in). Part of the ABC transporter complex ZnuABC involved in zinc import. Responsible for energy coupling to the transport system. This chain is Zinc import ATP-binding protein ZnuC, found in Jannaschia sp. (strain CCS1).